We begin with the raw amino-acid sequence, 1941 residues long: Myosin-7B (1941 aa).

Residues 30-80 enclose the Myosin N-terminal SH3-like domain; sequence DGKKRVWVPDEQDAYVEAEVKTEATGGKVTVETKDQKVLTVRETEMQPMNP. The Myosin motor domain maps to 84 to 785; sequence DLLEDMAMMT…LLGILEELRD (702 aa). 177-184 lines the ATP pocket; that stretch reads GESGAGKT. Actin-binding regions lie at residues 662–684 and 764–778; these read LNKL…VPNE and QFGH…GLLG. The region spanning 788-817 is the IQ domain; sequence LAKVLTLLQARSRGRLMRLEYQRMLGGRDA. The stretch at 846–1935 forms a coiled coil; that stretch reads LLRSAQAEEE…KLRARSRDAL (1090 aa). The tract at residues 1887–1941 is disordered; the sequence is RQFEEAEQQASTNLAKYRKAQHELDDAEERADMAETQANKLRARSRDALGPKHKE. The segment covering 1930 to 1941 has biased composition (basic and acidic residues); sequence RSRDALGPKHKE.

It belongs to the TRAFAC class myosin-kinesin ATPase superfamily. Myosin family. As to quaternary structure, muscle myosin is a hexameric protein that consists of 2 heavy chain subunits (MHC), 2 alkali light chain subunits (MLC) and 2 regulatory light chain subunits (MLC-2).

It is found in the membrane. Functionally, involved in muscle contraction. This Mus musculus (Mouse) protein is Myosin-7B (Myh7b).